The primary structure comprises 350 residues: Ribonuclease H2 subunit B (350 aa).

A compositionally biased stretch (polar residues) spans 134–151 (QDYSNSSDTGENQKSNSK). Residues 134 to 153 (QDYSNSSDTGENQKSNSKTN) are disordered.

The protein belongs to the RNase H2 subunit B family. Highly divergent. As to quaternary structure, the RNase 2 complex is a heterotrimer composed of the catalytic subunit RNH201 and of the non-catalytic subunits RNH202 and RNH203.

It localises to the nucleus. Functionally, non catalytic subunit of RNase H2, an endonuclease that specifically degrades the RNA of RNA:DNA hybrids. Participates in DNA replication, possibly by mediating the removal of lagging-strand Okazaki fragment RNA primers during DNA replication. Mediates the excision of single ribonucleotides from DNA:RNA duplexes. This chain is Ribonuclease H2 subunit B (RNH202), found in Saccharomyces cerevisiae (strain ATCC 204508 / S288c) (Baker's yeast).